We begin with the raw amino-acid sequence, 350 residues long: Phospho-2-dehydro-3-deoxyheptonate aldolase, Phe-sensitive (350 aa).

Residue Lys-244 is modified to N6-acetyllysine.

This sequence belongs to the class-I DAHP synthase family. In terms of assembly, homotetramer.

The catalysed reaction is D-erythrose 4-phosphate + phosphoenolpyruvate + H2O = 7-phospho-2-dehydro-3-deoxy-D-arabino-heptonate + phosphate. It participates in metabolic intermediate biosynthesis; chorismate biosynthesis; chorismate from D-erythrose 4-phosphate and phosphoenolpyruvate: step 1/7. Functionally, stereospecific condensation of phosphoenolpyruvate (PEP) and D-erythrose-4-phosphate (E4P) giving rise to 3-deoxy-D-arabino-heptulosonate-7-phosphate (DAHP). This is Phospho-2-dehydro-3-deoxyheptonate aldolase, Phe-sensitive (aroG) from Escherichia coli O157:H7.